A 396-amino-acid polypeptide reads, in one-letter code: Elongation factor Tu 1 (396 aa).

Residues 10 to 206 (KPHCNVGTIG…AVDDYIPQPE (197 aa)) form the tr-type G domain. The G1 stretch occupies residues 19-26 (GHVDHGKT). Residue 19–26 (GHVDHGKT) coordinates GTP. A Mg(2+)-binding site is contributed by T26. Positions 60–64 (GITIS) are G2. Positions 81 to 84 (DCPG) are G3. GTP contacts are provided by residues 81–85 (DCPGH) and 136–139 (NKCD). Residues 136–139 (NKCD) are G4. Residues 174–176 (SAL) form a G5 region.

The protein belongs to the TRAFAC class translation factor GTPase superfamily. Classic translation factor GTPase family. EF-Tu/EF-1A subfamily. In terms of assembly, monomer.

The protein localises to the cytoplasm. The catalysed reaction is GTP + H2O = GDP + phosphate + H(+). Its function is as follows. GTP hydrolase that promotes the GTP-dependent binding of aminoacyl-tRNA to the A-site of ribosomes during protein biosynthesis. The sequence is that of Elongation factor Tu 1 from Rhodospirillum rubrum (strain ATCC 11170 / ATH 1.1.1 / DSM 467 / LMG 4362 / NCIMB 8255 / S1).